The chain runs to 202 residues: Large ribosomal subunit protein bL9 (202 aa).

Residues 176-202 (AAGEFFDPDAQHDDEPAAEDDQNAEEK) form a disordered region. Acidic residues predominate over residues 191-202 (PAAEDDQNAEEK).

Belongs to the bacterial ribosomal protein bL9 family.

Functionally, binds to the 23S rRNA. The polypeptide is Large ribosomal subunit protein bL9 (Nitrobacter winogradskyi (strain ATCC 25391 / DSM 10237 / CIP 104748 / NCIMB 11846 / Nb-255)).